Reading from the N-terminus, the 282-residue chain is Putative 4-diphosphocytidyl-2-C-methyl-D-erythritol kinase (282 aa).

The active site involves Lys9. Residue 93-103 coordinates ATP; sequence PVSAGLAGGSA. Residue Asp135 is part of the active site.

It belongs to the GHMP kinase family. IspE subfamily.

It catalyses the reaction 4-CDP-2-C-methyl-D-erythritol + ATP = 4-CDP-2-C-methyl-D-erythritol 2-phosphate + ADP + H(+). Catalyzes the phosphorylation of the position 2 hydroxy group of 4-diphosphocytidyl-2C-methyl-D-erythritol. This chain is Putative 4-diphosphocytidyl-2-C-methyl-D-erythritol kinase, found in Staphylococcus aureus (strain MRSA252).